The following is a 179-amino-acid chain: Cell division protein SepF (179 aa).

A disordered region spans residues Leu22 to Lys55. Over residues Thr33 to Lys55 the composition is skewed to polar residues.

Belongs to the SepF family. Homodimer. Interacts with FtsZ.

The protein resides in the cytoplasm. Cell division protein that is part of the divisome complex and is recruited early to the Z-ring. Probably stimulates Z-ring formation, perhaps through the cross-linking of FtsZ protofilaments. Its function overlaps with FtsA. The chain is Cell division protein SepF from Streptococcus pneumoniae (strain Taiwan19F-14).